Here is an 882-residue protein sequence, read N- to C-terminus: Lon protease homolog, mitochondrial (882 aa).

The transit peptide at 1 to 34 (MIHVLKSRSTLLTASSIVRTSVGSSSRYSQTRTY) directs the protein to the mitochondrion. The 214-residue stretch at 68 to 281 (TLGLPLVSRP…KALVLLNRER (214 aa)) folds into the Lon N-terminal domain. Residue 435–442 (GPPGTGKT) participates in ATP binding. A Lon proteolytic domain is found at 687–878 (PLPHGIVMGL…DKVYEVAFSS (192 aa)). Active-site residues include serine 784 and lysine 827.

Belongs to the peptidase S16 family. As to quaternary structure, homohexamer or homoheptamer. Organized in a ring with a central cavity.

It is found in the mitochondrion matrix. The catalysed reaction is Hydrolysis of proteins in presence of ATP.. In terms of biological role, ATP-dependent serine protease that mediates the selective degradation of misfolded, unassembled or oxidatively damaged polypeptides as well as certain short-lived regulatory proteins in the mitochondrial matrix. May also have a chaperone function in the assembly of inner membrane protein complexes. Participates in the regulation of mitochondrial gene expression and in the maintenance of the integrity of the mitochondrial genome. Binds to mitochondrial DNA in a site-specific manner. In Phaeodactylum tricornutum (strain CCAP 1055/1), this protein is Lon protease homolog, mitochondrial.